The following is a 391-amino-acid chain: Deoxyguanosinetriphosphate triphosphohydrolase-like protein (391 aa).

One can recognise an HD domain in the interval 62-198; sequence RLTHSLEVST…ASLADDISYI (137 aa).

Belongs to the dGTPase family. Type 2 subfamily.

This Rickettsia akari (strain Hartford) protein is Deoxyguanosinetriphosphate triphosphohydrolase-like protein.